Here is an 822-residue protein sequence, read N- to C-terminus: Ribonucleoside-diphosphate reductase large subunit (822 aa).

Residues Thr249, 264-265 (SC), Gly295, 470-474 (NLCTE), and 651-655 (PTAAS) contribute to the substrate site. Cys265 and Cys487 are oxidised to a cystine. Catalysis depends on Asn470, which acts as the Proton acceptor. Residue Cys472 is the Cysteine radical intermediate of the active site. The active-site Proton acceptor is Glu474.

It belongs to the ribonucleoside diphosphate reductase large chain family. As to quaternary structure, heterotetramer composed of a homodimer of the large subunit (R1) and a homodimer of the small subunit (R2). Larger multisubunit protein complex are also active, composed of (R1)n(R2)n.

The enzyme catalyses a 2'-deoxyribonucleoside 5'-diphosphate + [thioredoxin]-disulfide + H2O = a ribonucleoside 5'-diphosphate + [thioredoxin]-dithiol. Its function is as follows. Ribonucleoside-diphosphate reductase holoenzyme provides the precursors necessary for viral DNA synthesis. Allows virus growth in non-dividing cells, as well as reactivation from latency in infected hosts. Catalyzes the biosynthesis of deoxyribonucleotides from the corresponding ribonucleotides. The chain is Ribonucleoside-diphosphate reductase large subunit from Gallus gallus (Chicken).